Reading from the N-terminus, the 424-residue chain is Glutamyl-tRNA(Gln) amidotransferase subunit D (424 aa).

Residues 56-78 (GETANGSRNGGKGCKTNEEELPE) form a disordered region. One can recognise an Asparaginase/glutaminase domain in the interval 84-413 (PKIAILSTGG…EKAAGMLRED (330 aa)). Catalysis depends on residues T94, T170, D171, and K247.

Belongs to the asparaginase 1 family. GatD subfamily. As to quaternary structure, heterodimer of GatD and GatE.

The catalysed reaction is L-glutamyl-tRNA(Gln) + L-glutamine + ATP + H2O = L-glutaminyl-tRNA(Gln) + L-glutamate + ADP + phosphate + H(+). Allows the formation of correctly charged Gln-tRNA(Gln) through the transamidation of misacylated Glu-tRNA(Gln) in organisms which lack glutaminyl-tRNA synthetase. The reaction takes place in the presence of glutamine and ATP through an activated gamma-phospho-Glu-tRNA(Gln). The GatDE system is specific for glutamate and does not act on aspartate. The chain is Glutamyl-tRNA(Gln) amidotransferase subunit D from Methanosarcina acetivorans (strain ATCC 35395 / DSM 2834 / JCM 12185 / C2A).